The primary structure comprises 601 residues: Trehalose synthase/amylase TreS (601 aa).

The tract at residues M1–G21 is disordered. D98 contacts substrate. A Ca(2+)-binding site is contributed by N140. The substrate site is built by H141 and Q206. Residue D208 participates in Ca(2+) binding. R236 contacts substrate. The active-site Nucleophile is D238. Positions 242, 243, and 245 each coordinate Ca(2+). E280 acts as the Proton donor in catalysis. Residues H349 and D350 each contribute to the substrate site.

It belongs to the glycosyl hydrolase 13 family. TreS subfamily. Homohexamer.

The enzyme catalyses D-maltose = alpha,alpha-trehalose. The catalysed reaction is Endohydrolysis of (1-&gt;4)-alpha-D-glucosidic linkages in polysaccharides containing three or more (1-&gt;4)-alpha-linked D-glucose units.. Its pathway is glycan biosynthesis; glycogen biosynthesis. It participates in capsule biogenesis; capsule polysaccharide biosynthesis. Functionally, catalyzes the reversible interconversion of maltose and trehalose by transglucosylation. Also displays amylase activity, catalyzing the endohydrolysis of (1-&gt;4)-alpha-D-glucosidic linkages in glycogen and maltooligosaccharides such as maltoheptaose, to produce maltose which then can be converted to trehalose. TreS plays a key role in the utilization of trehalose for the production of glycogen and alpha-glucan via the TreS-Pep2 branch involved in the biosynthesis of maltose-1-phosphate (M1P). Might also function as a sensor and/or regulator of trehalose levels within the cell. Thus, when trehalose levels in the cell become dangerously low, TreS could expedite the conversion of glycogen to maltose via its amylase activity and then convert the maltose to trehalose; but this enzyme also could expedite or promote the conversion of trehalose to glycogen when cytoplasmic trehalose levels become too high. The polypeptide is Trehalose synthase/amylase TreS (Mycobacterium tuberculosis (strain CDC 1551 / Oshkosh)).